A 123-amino-acid chain; its full sequence is MNNNFKRTDRIAEMIQRKLALIIPQEIKDPRLKGFVTISAVKVAADLGHAKIYFTVLNEDKSVVTNILNGAASYLRSALARSITLRTVPQLHFIYDESIEYGQRLSRLIDEVNPPDSSSDDNN.

This sequence belongs to the RbfA family. As to quaternary structure, monomer. Binds 30S ribosomal subunits, but not 50S ribosomal subunits or 70S ribosomes.

It localises to the cytoplasm. In terms of biological role, one of several proteins that assist in the late maturation steps of the functional core of the 30S ribosomal subunit. Associates with free 30S ribosomal subunits (but not with 30S subunits that are part of 70S ribosomes or polysomes). Required for efficient processing of 16S rRNA. May interact with the 5'-terminal helix region of 16S rRNA. In Legionella pneumophila (strain Lens), this protein is Ribosome-binding factor A.